The sequence spans 544 residues: Pectinesterase 3 (544 aa).

N-linked (GlcNAc...) asparagine glycans are attached at residues Asn174, Asn257, and Asn291. The substrate site is built by Thr306 and Gln336. Asp359 serves as the catalytic Proton donor. The active-site Nucleophile is Asp380. The substrate site is built by Arg448 and Trp450. A glycan (N-linked (GlcNAc...) asparagine) is linked at Asn532.

It in the N-terminal section; belongs to the PMEI family. The protein in the C-terminal section; belongs to the pectinesterase family.

The protein localises to the secreted. Its subcellular location is the cell wall. It carries out the reaction [(1-&gt;4)-alpha-D-galacturonosyl methyl ester](n) + n H2O = [(1-&gt;4)-alpha-D-galacturonosyl](n) + n methanol + n H(+). Its pathway is glycan metabolism; pectin degradation; 2-dehydro-3-deoxy-D-gluconate from pectin: step 1/5. Its function is as follows. Acts in the modification of cell walls via demethylesterification of cell wall pectin. This chain is Pectinesterase 3 (PME3), found in Solanum lycopersicum (Tomato).